Consider the following 314-residue polypeptide: uncharacterized protein (314 aa).

Positions 1-20 are cleaved as a signal peptide; the sequence is MKKRAGIWAALLLAAVMLAG. Cysteine 21 carries the N-palmitoyl cysteine lipid modification. A lipid anchor (S-diacylglycerol cysteine) is attached at cysteine 21. The 253-residue stretch at 59-311 folds into the Fe/B12 periplasmic-binding domain; the sequence is KIVSLMPSNT…ELAESIYPDT (253 aa).

This sequence belongs to the bacterial solute-binding protein 8 family. In terms of assembly, the complex is composed of two ATP-binding proteins (YvrA), two transmembrane proteins (YvrB) and a solute-binding protein (YvrC).

The protein localises to the cell membrane. Its function is as follows. Probably part of an ABC transporter complex. This is an uncharacterized protein from Bacillus subtilis (strain 168).